Reading from the N-terminus, the 123-residue chain is Defensin beta 118 (123 aa).

A signal peptide spans 1 to 19 (MKLLLLALPMLVLLPQVIP). Intrachain disulfides connect C27–C54, C34–C48, and C38–C55. Residues 65–123 (VPATSPTPLSDSTPGIIDDILTVRFTTDYFEVSSKKDMVEESEAGRGTETSLPNVHHSS) constitute a propeptide that is removed on maturation. Basic and acidic residues predominate over residues 100–110 (KDMVEESEAGR). The disordered stretch occupies residues 100-123 (KDMVEESEAGRGTETSLPNVHHSS). The span at 112-123 (TETSLPNVHHSS) shows a compositional bias: polar residues.

Belongs to the beta-defensin family. In terms of processing, the three-dimensional structure formed by the three intramolecular disulfide bridges is indispensable for antimicrobial activity. In terms of tissue distribution, high-level and epididymis-specific expression. Most abundant in the epithelium of the caput and present in the epididymis lumen and bound to sperm. Also expressed in pancreas.

The protein resides in the secreted. Its function is as follows. Host defense peptide that exhibits antimicrobial activity against both Gram-negative bacteria, such as E.coli and S.typhimurium, and Gram-positive bacteria, such as S.aureus and B.subtilis. Inhibits cell adhesion of E.coli on intestinal epithelial enterocytes. Causes rapid permeabilization of both the outer and inner membrane of E.coli, leading to morphological alterations on the bacterial surface. Binds to bacterial lipopolysaccharides (LPS) with high affinity, and may thereby be involved in immunoregulation through LPS neutralization. May contribute to epididymal innate immunity and protect the sperm against attack by microorganisms. The chain is Defensin beta 118 (DEFB118) from Homo sapiens (Human).